Consider the following 447-residue polypeptide: Argininosuccinate synthase (447 aa).

Residues 20 to 28 (AFSGGLDTS) and A46 contribute to the ATP site. Y102 lines the L-citrulline pocket. Residues G132 and T134 each contribute to the ATP site. Residues T134, N138, and D139 each coordinate L-aspartate. N138 is a binding site for L-citrulline. D139 is a binding site for ATP. R142 and S195 together coordinate L-citrulline. D197 is an ATP binding site. The L-citrulline site is built by T204, E206, and E283.

The protein belongs to the argininosuccinate synthase family. Type 2 subfamily. Homotetramer.

It is found in the cytoplasm. It catalyses the reaction L-citrulline + L-aspartate + ATP = 2-(N(omega)-L-arginino)succinate + AMP + diphosphate + H(+). It functions in the pathway amino-acid biosynthesis; L-arginine biosynthesis; L-arginine from L-ornithine and carbamoyl phosphate: step 2/3. The protein is Argininosuccinate synthase of Neisseria meningitidis serogroup C / serotype 2a (strain ATCC 700532 / DSM 15464 / FAM18).